The primary structure comprises 201 residues: 3-isopropylmalate dehydratase small subunit (201 aa).

The protein belongs to the LeuD family. LeuD type 1 subfamily. In terms of assembly, heterodimer of LeuC and LeuD.

It catalyses the reaction (2R,3S)-3-isopropylmalate = (2S)-2-isopropylmalate. Its pathway is amino-acid biosynthesis; L-leucine biosynthesis; L-leucine from 3-methyl-2-oxobutanoate: step 2/4. Its function is as follows. Catalyzes the isomerization between 2-isopropylmalate and 3-isopropylmalate, via the formation of 2-isopropylmaleate. This Paramagnetospirillum magneticum (strain ATCC 700264 / AMB-1) (Magnetospirillum magneticum) protein is 3-isopropylmalate dehydratase small subunit.